Here is a 72-residue protein sequence, read N- to C-terminus: Small ribosomal subunit protein bS20 (72 aa).

The protein belongs to the bacterial ribosomal protein bS20 family.

Functionally, binds directly to 16S ribosomal RNA. This Aeromonas hydrophila protein is Small ribosomal subunit protein bS20 (rpsT).